The chain runs to 201 residues: MAGPQRRGSGAGGGERRDRKGRDGGAGAAEKTAYVERVVAINRVAKVVKGGRRFSFTALVVVGDGDGTVGVGYGKAKEVPAAIAKGVEEAKKHFFKVPRIQGTIPHPIQGEKAAGVVLLKPASPGTGVIAGGPVRAVLECAGIHDVLSKSLGSDNQINIVHATVEALKGLQRPEEIAARRGLPLEDVAPAALLRARAGAGA.

A disordered region spans residues 1 to 28 (MAGPQRRGSGAGGGERRDRKGRDGGAGA). Residues 14 to 23 (GERRDRKGRD) show a composition bias toward basic and acidic residues. The S5 DRBM domain maps to 34-97 (YVERVVAINR…EEAKKHFFKV (64 aa)).

It belongs to the universal ribosomal protein uS5 family. Part of the 30S ribosomal subunit. Contacts proteins S4 and S8.

With S4 and S12 plays an important role in translational accuracy. Its function is as follows. Located at the back of the 30S subunit body where it stabilizes the conformation of the head with respect to the body. The sequence is that of Small ribosomal subunit protein uS5 from Streptomyces coelicolor (strain ATCC BAA-471 / A3(2) / M145).